A 225-amino-acid chain; its full sequence is tRNA (guanine-N(1)-)-methyltransferase (225 aa).

S-adenosyl-L-methionine is bound by residues glycine 112 and isoleucine 132–leucine 137.

It belongs to the RNA methyltransferase TrmD family. In terms of assembly, homodimer.

Its subcellular location is the cytoplasm. It carries out the reaction guanosine(37) in tRNA + S-adenosyl-L-methionine = N(1)-methylguanosine(37) in tRNA + S-adenosyl-L-homocysteine + H(+). Functionally, specifically methylates guanosine-37 in various tRNAs. In Flavobacterium psychrophilum (strain ATCC 49511 / DSM 21280 / CIP 103535 / JIP02/86), this protein is tRNA (guanine-N(1)-)-methyltransferase.